The primary structure comprises 114 residues: UPF0342 protein lp_1415 (114 aa).

The protein belongs to the UPF0342 family.

In Lactiplantibacillus plantarum (strain ATCC BAA-793 / NCIMB 8826 / WCFS1) (Lactobacillus plantarum), this protein is UPF0342 protein lp_1415.